A 580-amino-acid polypeptide reads, in one-letter code: 2-isopropylmalate synthase (580 aa).

Positions 1–11 are enriched in polar residues; sequence MSATAFPTLST. Residues 1–37 form a disordered region; sequence MSATAFPTLSTPAGEIPATAPAWNRQRRSQMPSHRYR. The Pyruvate carboxyltransferase domain occupies 61–334; the sequence is PLWVPVDLRD…DPMIDFSDID (274 aa). Mg(2+) contacts are provided by Asp-70, His-273, His-275, and Asn-309. The interval 476–580 is regulatory domain; that stretch reads EGEADAPQAD…ARAVAEVRPG (105 aa).

It belongs to the alpha-IPM synthase/homocitrate synthase family. LeuA type 2 subfamily. Homodimer. Requires Mg(2+) as cofactor.

Its subcellular location is the cytoplasm. It carries out the reaction 3-methyl-2-oxobutanoate + acetyl-CoA + H2O = (2S)-2-isopropylmalate + CoA + H(+). It functions in the pathway amino-acid biosynthesis; L-leucine biosynthesis; L-leucine from 3-methyl-2-oxobutanoate: step 1/4. In terms of biological role, catalyzes the condensation of the acetyl group of acetyl-CoA with 3-methyl-2-oxobutanoate (2-ketoisovalerate) to form 3-carboxy-3-hydroxy-4-methylpentanoate (2-isopropylmalate). The chain is 2-isopropylmalate synthase from Nocardia farcinica (strain IFM 10152).